Reading from the N-terminus, the 446-residue chain is Calcium-binding and coiled-coil domain-containing protein 2 (446 aa).

Residues 133–136 (ILVV) carry the CLIR motif. Residues 137–349 (TTQGEVEEIE…RENSRLLSYM (213 aa)) adopt a coiled-coil conformation. The short motif at 203–206 (DYWE) is the LIR-like element. The disordered stretch occupies residues 362–390 (TSDEGGARQNPGLAYGNPYSGIQESSSPS). The segment at 371 to 381 (NPGLAYGNPYS) is interaction with LGALS8. Polar residues predominate over residues 381–390 (SGIQESSSPS). Residues 395–446 (KKCPICKADDICDHTLEQQQMQPLCFNCPICDKIFPATEKQIFEDHVFCHSL) are interaction with MYO6. The UBZ1-type zinc finger occupies 419-444 (CFNCPICDKIFPATEKQIFEDHVFCH). Zn(2+)-binding residues include Cys-422, Cys-425, His-440, and His-444. The residue at position 445 (Ser-445) is a Phosphoserine.

Belongs to the CALCOCO family. In terms of assembly, dimer. Part of a complex consisting of CALCOCO2, TAX1BP1 and MYO6. Interacts with MYO6. Interacts with GEMIN4. Interacts with ATG8 family members MAP1LC3A, MAP1LC3B, GABARAP, GABARAPL1 and GABARAPL2. Interacts with ATG8 family member MAP1LC3C. Interacts with LGALS8. Interacts with TOM1; the interaction is indirect and is mediated by MYO6, which acts as a bridge between TOM1 and CALCOCO2. Interacts with AZI2. As to quaternary structure, (Microbial infection) Interacts with Lassa virus protein Z. (Microbial infection) Interacts with Mopeia virus protein Z. In terms of processing, (Microbial infection) Cleaved by S.pyogenes SpeB protease; leading to its degradation. Degradation by SpeB prevents autophagy, promoting to S.pyogenes intracellular replication. In terms of tissue distribution, expressed in all tissues tested with highest expression in skeletal muscle and lowest in brain.

Its subcellular location is the cytoplasm. The protein localises to the perinuclear region. It is found in the cytoskeleton. The protein resides in the cytoplasmic vesicle. It localises to the autophagosome membrane. In terms of biological role, xenophagy-specific receptor required for autophagy-mediated intracellular bacteria degradation. Acts as an effector protein of galectin-sensed membrane damage that restricts the proliferation of infecting pathogens such as Salmonella typhimurium upon entry into the cytosol by targeting LGALS8-associated bacteria for autophagy. Initially orchestrates bacteria targeting to autophagosomes and subsequently ensures pathogen degradation by regulating pathogen-containing autophagosome maturation. Bacteria targeting to autophagosomes relies on its interaction with MAP1LC3A, MAP1LC3B and/or GABARAPL2, whereas regulation of pathogen-containing autophagosome maturation requires the interaction with MAP3LC3C. May play a role in ruffle formation and actin cytoskeleton organization and seems to negatively regulate constitutive secretion. This chain is Calcium-binding and coiled-coil domain-containing protein 2 (CALCOCO2), found in Homo sapiens (Human).